The primary structure comprises 245 residues: 8-amino-3,8-dideoxy-manno-octulosonate cytidylyltransferase (245 aa).

This sequence belongs to the KdsB family.

Its subcellular location is the cytoplasm. The enzyme catalyses 8-amino-3,8-dideoxy-alpha-D-manno-octulosonate + CTP = CMP-8-amino-3,8-dideoxy-alpha-D-manno-oct-2-ulosonate + diphosphate. It participates in bacterial outer membrane biogenesis; lipopolysaccharide biosynthesis. In terms of biological role, activates KDO8N (a required 8-carbon sugar) for incorporation into bacterial lipopolysaccharide in the Shewanella genus. The protein is 8-amino-3,8-dideoxy-manno-octulosonate cytidylyltransferase of Shewanella sediminis (strain HAW-EB3).